Reading from the N-terminus, the 215-residue chain is MKIVLLGPPGAGKGTQAKSISNRYSIPHISTGDIFRKNISENTPLGMEARSYMDKGLLVPDEVTINMVKDRLQEEDCLSGYLLDGFPRTVAQAEALNEFLENRNEQLDTALLIDVPSEFILDRMTGRRVCTSCGGSFHIKFNPPTIDGKCNLCGSDIVQRKDDTVETVKERIDVYDKQTQPLIEFYKSKNLLSMVDGTKAIDQVFEDICKLLGEQ.

Position 10–15 (10–15) interacts with ATP; the sequence is GAGKGT. Residues 30–59 are NMP; that stretch reads STGDIFRKNISENTPLGMEARSYMDKGLLV. Residues T31, R36, 57–59, 85–88, and Q92 contribute to the AMP site; these read LLV and GFPR. The interval 126 to 163 is LID; it reads GRRVCTSCGGSFHIKFNPPTIDGKCNLCGSDIVQRKDD. R127 lines the ATP pocket. C130 and C133 together coordinate Zn(2+). 136–137 is an ATP binding site; that stretch reads SF. Zn(2+)-binding residues include C150 and C153. AMP contacts are provided by R160 and R171. Residue K199 coordinates ATP.

The protein belongs to the adenylate kinase family. In terms of assembly, monomer.

The protein localises to the cytoplasm. The catalysed reaction is AMP + ATP = 2 ADP. It functions in the pathway purine metabolism; AMP biosynthesis via salvage pathway; AMP from ADP: step 1/1. Its function is as follows. Catalyzes the reversible transfer of the terminal phosphate group between ATP and AMP. Plays an important role in cellular energy homeostasis and in adenine nucleotide metabolism. The sequence is that of Adenylate kinase from Clostridium botulinum (strain Eklund 17B / Type B).